The primary structure comprises 342 residues: Serpentine receptor class r-10 (342 aa).

Residues 1-11 (MTGELWLTLVD) are Extracellular-facing. A helical transmembrane segment spans residues 12–32 (TADIVGFSMTFCVNIVLLFLL). The Cytoplasmic portion of the chain corresponds to 33-38 (KNRGKN). A helical transmembrane segment spans residues 39–59 (LGTYKHLMAFFSVFSIFYAII). At 60 to 92 (ESILRPIMHIENATFFLISRKRFNYSTRLGKIN) the chain is on the extracellular side. Residues Asn-71 and Asn-83 are each glycosylated (N-linked (GlcNAc...) asparagine). A helical transmembrane segment spans residues 93-113 (SAFYCACFATSFVVSGVHFVY). Residues 114–131 (RFFASCKPHLLRSFNMPY) are Cytoplasmic-facing. Residues 132-152 (LLLWPLGCSIPVMMWASVSYF) form a helical membrane-spanning segment. Over 153–202 (LYPDTAFTEAAVTNVLNTHYHSIKKDNVSYIAYVYYQYDENGVRYVYLKN) the chain is Extracellular. N-linked (GlcNAc...) asparagine glycosylation occurs at Asn-179. A helical membrane pass occupies residues 203–223 (LLGCFVHYFVMSATFVVMFIC). At 224-257 (GYLTWKTMRKHKTASDRTRQLQKQLFKALVLQTL) the chain is on the cytoplasmic side. A helical membrane pass occupies residues 258–278 (IPTIFMYAPTGVMFIAPFFSI). Topologically, residues 279-285 (NLNANAN) are extracellular. A helical membrane pass occupies residues 286-306 (FIVFCSFLYPGLDPLILILII). Residues 307-342 (RDFRQTVFKFFCLRKKNSVDESRSTTRANMSQVATH) lie on the Cytoplasmic side of the membrane.

Belongs to the nematode receptor-like protein str family. In terms of assembly, interacts with odr-4.

It localises to the cell projection. It is found in the cilium membrane. Its function is as follows. An odorant receptor which affects chemotaxis to the volatile odorant diacetyl. Specifies AWA neuronal cell fate via the odr-7 pathway. The chain is Serpentine receptor class r-10 from Caenorhabditis briggsae.